The primary structure comprises 325 residues: Tetraacyldisaccharide 4'-kinase (325 aa).

55 to 62 (TAGGNGKT) is an ATP binding site.

It belongs to the LpxK family.

It carries out the reaction a lipid A disaccharide + ATP = a lipid IVA + ADP + H(+). It participates in glycolipid biosynthesis; lipid IV(A) biosynthesis; lipid IV(A) from (3R)-3-hydroxytetradecanoyl-[acyl-carrier-protein] and UDP-N-acetyl-alpha-D-glucosamine: step 6/6. Transfers the gamma-phosphate of ATP to the 4'-position of a tetraacyldisaccharide 1-phosphate intermediate (termed DS-1-P) to form tetraacyldisaccharide 1,4'-bis-phosphate (lipid IVA). The polypeptide is Tetraacyldisaccharide 4'-kinase (Salmonella heidelberg (strain SL476)).